Reading from the N-terminus, the 372-residue chain is Citrate synthase 2 (372 aa).

Residue H257 is part of the active site. The residue at position 284 (S284) is a Phosphoserine. Residue D308 is part of the active site.

It belongs to the citrate synthase family. In terms of assembly, homodimer.

The catalysed reaction is oxaloacetate + acetyl-CoA + H2O = citrate + CoA + H(+). The protein operates within carbohydrate metabolism; tricarboxylic acid cycle; isocitrate from oxaloacetate: step 1/2. Might regulate the synthesis and function of enzymes involved in later enzymatic steps of Krebs cycle. Loss in activity results in sporulation defect. This chain is Citrate synthase 2 (citZ), found in Bacillus subtilis (strain 168).